A 719-amino-acid chain; its full sequence is Catalase-3 (719 aa).

The N-terminal stretch at 1-18 (MRVNALLPLSGLIGTALA) is a signal peptide. Positions 19-30 (ACPFADPSALGR) are excised as a propeptide. Active-site residues include His-102 and Asn-175. Tyr-389 is a binding site for heme.

Belongs to the catalase family. Requires heme as cofactor.

It catalyses the reaction 2 H2O2 = O2 + 2 H2O. In terms of biological role, occurs in almost all aerobically respiring organisms and serves to protect cells from the toxic effects of hydrogen peroxide. The sequence is that of Catalase-3 (cat-3) from Neurospora crassa (strain ATCC 24698 / 74-OR23-1A / CBS 708.71 / DSM 1257 / FGSC 987).